The primary structure comprises 91 residues: Acylphosphatase (91 aa).

In terms of domain architecture, Acylphosphatase-like spans 4 to 91 (RAIVTIKGLV…GEFDDFDVRY (88 aa)). Residues Arg19 and Asn37 contribute to the active site.

The protein belongs to the acylphosphatase family.

The enzyme catalyses an acyl phosphate + H2O = a carboxylate + phosphate + H(+). The protein is Acylphosphatase (acyP) of Geobacter sulfurreducens (strain ATCC 51573 / DSM 12127 / PCA).